A 611-amino-acid polypeptide reads, in one-letter code: MSKIIGIDLGTTNSCVAVMEGGEPKVIPNPEGNRTTPSVVAFKNEERQVGEVAKRQAITNPNTIMSVKRHMGTDYKVEIEGKEYTPQEISAIILQNLKASAEAYLGETVTKAVITVPAYFNDAERQATKDAGRIAGLEVERIINEPTAAALAYGLEKQDEEQKILVYDLGGGTFDVSILELADGTFEVISTAGDNRLGGDDFDQVIIDHLVAEFKKENNIDLSQDKMALQRLKDAAEKAKKDLSGVTQTQISLPFISAGAAXPLHLELTLTRAKFEELSANLVERTLEPTRRALKDAGLSASELDRVILVGGSTRIPAVQEAIKRETGKEPYKGVNPDEVVALGAAVQGGVLTGDVEGVLLLDVTPLSLGIETMGGVFTKLIERNTTIPTSKSQVFSTAADNQPAVDIHVLQGERPMSADNKTLGRFQLTDIPPAPRGIPQIEVTFDIDANGIVNVRAKDLGTSKEQAITIQSSSGLSDEEVDRMVKEAEANADADQKRKEEVELRNEADQLVFQTDKVVKDLEGKVDAAEVAKATEAKEALQAAIEKNELEEIRAKKDALQEIVQQLTVKLYEQAQAAAGQAEGAQGAQDAGAKKDNVVDAEFEEVKEDK.

Phosphothreonine; by autocatalysis is present on Thr173. Positions 579–592 are enriched in low complexity; that stretch reads AAGQAEGAQGAQDA. The interval 579 to 598 is disordered; that stretch reads AAGQAEGAQGAQDAGAKKDN.

This sequence belongs to the heat shock protein 70 family.

Functionally, acts as a chaperone. The sequence is that of Chaperone protein DnaK from Bacillus cereus (strain ATCC 10987 / NRS 248).